A 394-amino-acid polypeptide reads, in one-letter code: Tubulin-like protein CetZ4 (394 aa).

Residues 10 to 14 (QAGGK), 110 to 112 (GTG), Glu142, Asn169, and Asn187 each bind GTP.

It belongs to the CetZ family.

It is found in the cytoplasm. Involved in cell shape control. This is Tubulin-like protein CetZ4 from Haloferax volcanii (strain ATCC 29605 / DSM 3757 / JCM 8879 / NBRC 14742 / NCIMB 2012 / VKM B-1768 / DS2) (Halobacterium volcanii).